A 631-amino-acid chain; its full sequence is tRNA uridine 5-carboxymethylaminomethyl modification enzyme MnmG (631 aa).

Residues 13 to 18, valine 125, and serine 180 contribute to the FAD site; that span reads GGGHAG. An NAD(+)-binding site is contributed by 273–287; it reads GPRYCPSIEDKVNRY. Glutamine 370 contributes to the FAD binding site.

It belongs to the MnmG family. As to quaternary structure, homodimer. Heterotetramer of two MnmE and two MnmG subunits. FAD serves as cofactor.

It is found in the cytoplasm. In terms of biological role, NAD-binding protein involved in the addition of a carboxymethylaminomethyl (cmnm) group at the wobble position (U34) of certain tRNAs, forming tRNA-cmnm(5)s(2)U34. This chain is tRNA uridine 5-carboxymethylaminomethyl modification enzyme MnmG, found in Alcanivorax borkumensis (strain ATCC 700651 / DSM 11573 / NCIMB 13689 / SK2).